The chain runs to 370 residues: Cyclic AMP-responsive element-binding protein 3-like protein 4 (370 aa).

The required for transcriptional activation stretch occupies residues 1 to 55; it reads MELGCPELLEPPEDIFSTGSFLELGFNGPASKVPVTRGLQKSEPDDFLNLFIDPN. Topologically, residues 1-271 are cytoplasmic; sequence MELGCPELLE…QTSSRAAQTS (271 aa). The disordered stretch occupies residues 61–85; that stretch reads ETSPGRDSGVSEDPGSPAQQASSSP. The segment covering 76-85 has biased composition (low complexity); that stretch reads SPAQQASSSP. In terms of domain architecture, bZIP spans 193–256; the sequence is ILKKIRRKIR…IFLMEQVRQL (64 aa). Positions 195–234 are basic motif; the sequence is KKIRRKIRNKQSAQDSRRRKKEYLDGLESRVAACSEQNQK. The tract at residues 235–256 is leucine-zipper; sequence LQRKVQELERQNIFLMEQVRQL. The chain crosses the membrane as a helical; Signal-anchor for type II membrane protein span at residues 272–292; it reads TCVLILLFSLALIILPSFSPF. The Lumenal segment spans residues 293–370; sequence QGQSEARPED…IRGMVHTDEM (78 aa). Asparagine 318 and asparagine 342 each carry an N-linked (GlcNAc...) asparagine glycan.

It belongs to the bZIP family. ATF subfamily. In terms of assembly, binds DNA as a dimer. Forms a heterodimer with CREM isoform Tau. Post-translationally, controlled by regulated intramembrane proteolysis (RIP). Following ER stress a fragment containing the cytoplasmic transcription factor domain is released by proteolysis. The cleavage seems to be performed sequentially by site-1 and site-2 proteases (PS1 and PS2). PS1 cleavage may be suppressed by a determinant in the C-terminal region. In terms of tissue distribution, predominantly expressed at high levels in testis with isoform 2 being the predominant isoform. Specifically expressed in postmeiotic spermatids and accumulates in the mid/late stage (at protein level). Ubiquitously expressed at low levels.

It localises to the endoplasmic reticulum membrane. The protein localises to the cytoplasmic vesicle. It is found in the secretory vesicle. The protein resides in the acrosome inner membrane. Its subcellular location is the nucleus. Its function is as follows. Transcriptional activator that may play a role in the unfolded protein response of the testis. Proposed to be involved in spermiogenesis. May be involved in regulating the maturation of sperm head nuclei. Alternatively proposed to be a paternally delivered transcription factor that may function in early zygotic gene activation. Increases the binding of CREM isoform Tau with CRE. The CREM isoform Tau-CREB3L4 heterodimer functions through CRE but not through UPRE and may recruit HIRA to CRE to regulate histone exchange. The protein is Cyclic AMP-responsive element-binding protein 3-like protein 4 (Creb3l4) of Mus musculus (Mouse).